A 416-amino-acid chain; its full sequence is Tyrosine aminotransferase (416 aa).

Position 253 is an N6-(pyridoxal phosphate)lysine (Lys-253).

Belongs to the class-I pyridoxal-phosphate-dependent aminotransferase family. As to quaternary structure, homodimer. It depends on pyridoxal 5'-phosphate as a cofactor. In terms of processing, the N-terminus is blocked.

It is found in the cytoplasm. The protein resides in the mitochondrion. The enzyme catalyses L-tyrosine + 2-oxoglutarate = 3-(4-hydroxyphenyl)pyruvate + L-glutamate. It functions in the pathway amino-acid degradation; L-phenylalanine degradation; acetoacetate and fumarate from L-phenylalanine: step 2/6. Functionally, transaminase involved in tyrosine breakdown. Converts tyrosine to p-hydroxyphenylpyruvate. The polypeptide is Tyrosine aminotransferase (Trypanosoma cruzi).